A 411-amino-acid polypeptide reads, in one-letter code: RING-H2 finger protein ATL65 (411 aa).

The interval 1–32 (MRFVAPPPRSGDNSPSPSPSSGISEEILSRSS) is disordered. Positions 10-21 (SGDNSPSPSPSS) are enriched in low complexity. The chain crosses the membrane as a helical span at residues 36 to 56 (LEFSPPLIAMVVVLAAAFLFV). An RING-type; atypical zinc finger spans residues 156-198 (CAVCLLEFEEGDYVRTLPLCFHAFHLECIDEWLRSHPNCPLCR).

It belongs to the RING-type zinc finger family. ATL subfamily.

The protein resides in the membrane. It catalyses the reaction S-ubiquitinyl-[E2 ubiquitin-conjugating enzyme]-L-cysteine + [acceptor protein]-L-lysine = [E2 ubiquitin-conjugating enzyme]-L-cysteine + N(6)-ubiquitinyl-[acceptor protein]-L-lysine.. It functions in the pathway protein modification; protein ubiquitination. This Arabidopsis thaliana (Mouse-ear cress) protein is RING-H2 finger protein ATL65 (ATL65).